The sequence spans 1040 residues: Multidrug resistance protein MdtB (1040 aa).

12 consecutive transmembrane segments (helical) span residues 16–36 (FIMR…AGII), 347–367 (LMMA…NIPA), 369–389 (IIPG…MVFL), 396–416 (LTLM…IVVI), 440–460 (IGFT…PLLF), 472–492 (FAIT…TLTP), 537–557 (WLTL…WVFI), 863–883 (LGST…VLGI), 888–908 (FIHP…ALLA), 911–931 (IAGS…IGIV), 968–988 (ILMT…STGV), and 998–1018 (IGMV…TPVI).

The protein belongs to the resistance-nodulation-cell division (RND) (TC 2.A.6) family. MdtB subfamily. Part of a tripartite efflux system composed of MdtA, MdtB and MdtC. MdtB forms a heteromultimer with MdtC.

It localises to the cell inner membrane. The chain is Multidrug resistance protein MdtB from Shigella sonnei (strain Ss046).